The following is a 67-amino-acid chain: Cell division protein ZapB (67 aa).

Residues 3 to 59 adopt a coiled-coil conformation; sequence LELLSKLETKIQTALETIELLKMELEEEKQKSIGLAEQNQQLSQDLNSWNEKVTGLV.

This sequence belongs to the ZapB family. In terms of assembly, homodimer. The ends of the coiled-coil dimer bind to each other, forming polymers. Interacts with FtsZ.

The protein localises to the cytoplasm. Non-essential, abundant cell division factor that is required for proper Z-ring formation. It is recruited early to the divisome by direct interaction with FtsZ, stimulating Z-ring assembly and thereby promoting cell division earlier in the cell cycle. Its recruitment to the Z-ring requires functional FtsA or ZipA. This Shewanella woodyi (strain ATCC 51908 / MS32) protein is Cell division protein ZapB.